We begin with the raw amino-acid sequence, 204 residues long: Urease accessory protein UreG (204 aa).

GTP is bound at residue 12-19; that stretch reads GPVGSGKT.

It belongs to the SIMIBI class G3E GTPase family. UreG subfamily. As to quaternary structure, homodimer. UreD, UreF and UreG form a complex that acts as a GTP-hydrolysis-dependent molecular chaperone, activating the urease apoprotein by helping to assemble the nickel containing metallocenter of UreC. The UreE protein probably delivers the nickel.

It is found in the cytoplasm. In terms of biological role, facilitates the functional incorporation of the urease nickel metallocenter. This process requires GTP hydrolysis, probably effectuated by UreG. This chain is Urease accessory protein UreG, found in Pseudomonas paraeruginosa (strain DSM 24068 / PA7) (Pseudomonas aeruginosa (strain PA7)).